A 316-amino-acid chain; its full sequence is Transaldolase A (316 aa).

The active-site Schiff-base intermediate with substrate is the Lys131.

It belongs to the transaldolase family. Type 1 subfamily. In terms of assembly, homodimer.

The protein localises to the cytoplasm. The enzyme catalyses D-sedoheptulose 7-phosphate + D-glyceraldehyde 3-phosphate = D-erythrose 4-phosphate + beta-D-fructose 6-phosphate. It functions in the pathway carbohydrate degradation; pentose phosphate pathway; D-glyceraldehyde 3-phosphate and beta-D-fructose 6-phosphate from D-ribose 5-phosphate and D-xylulose 5-phosphate (non-oxidative stage): step 2/3. Transaldolase is important for the balance of metabolites in the pentose-phosphate pathway. This Shigella flexneri protein is Transaldolase A.